We begin with the raw amino-acid sequence, 123 residues long: NADH-quinone oxidoreductase subunit A (123 aa).

The next 3 helical transmembrane spans lie at 6–26, 66–86, and 93–113; these read LTPYLPLAVVLLLAGGMAMLI, VVALLFIVFDVEAVFLYPWAV, and WFGYVEMLVFAVTLVVGLIYI.

The protein belongs to the complex I subunit 3 family. In terms of assembly, NDH-1 is composed of 14 different subunits. Subunits NuoA, H, J, K, L, M, N constitute the membrane sector of the complex.

Its subcellular location is the cell inner membrane. It carries out the reaction a quinone + NADH + 5 H(+)(in) = a quinol + NAD(+) + 4 H(+)(out). NDH-1 shuttles electrons from NADH, via FMN and iron-sulfur (Fe-S) centers, to quinones in the respiratory chain. The immediate electron acceptor for the enzyme in this species is believed to be ubiquinone. Couples the redox reaction to proton translocation (for every two electrons transferred, four hydrogen ions are translocated across the cytoplasmic membrane), and thus conserves the redox energy in a proton gradient. The chain is NADH-quinone oxidoreductase subunit A from Myxococcus xanthus (strain DK1622).